We begin with the raw amino-acid sequence, 285 residues long: Protoheme IX farnesyltransferase (285 aa).

9 helical membrane-spanning segments follow: residues 13-33 (LGKL…AFLA), 40-60 (LLPI…AMII), 89-109 (EAII…FIDN), 110-130 (ILTA…YTIL), 137-157 (LNIV…YTSL), 165-185 (GFLL…SLAL), 194-214 (AHYP…AIAI), 218-238 (LMIP…LIAF), and 265-285 (FIFS…VKLI).

This sequence belongs to the UbiA prenyltransferase family. Protoheme IX farnesyltransferase subfamily.

It localises to the cell membrane. It carries out the reaction heme b + (2E,6E)-farnesyl diphosphate + H2O = Fe(II)-heme o + diphosphate. It functions in the pathway porphyrin-containing compound metabolism; heme O biosynthesis; heme O from protoheme: step 1/1. Its function is as follows. Converts heme B (protoheme IX) to heme O by substitution of the vinyl group on carbon 2 of heme B porphyrin ring with a hydroxyethyl farnesyl side group. In Saccharolobus islandicus (strain Y.G.57.14 / Yellowstone #1) (Sulfolobus islandicus), this protein is Protoheme IX farnesyltransferase.